We begin with the raw amino-acid sequence, 258 residues long: Protein OS-9 homolog (258 aa).

The signal sequence occupies residues 1-18 (MNWTSLVYLWFIFKSIFA). 3 N-linked (GlcNAc...) asparagine glycosylation sites follow: asparagine 2, asparagine 51, and asparagine 70. Residues 114 to 237 (TSCVFSFNLH…HINVPKLCSL (124 aa)) form the MRH domain. Residues cysteine 116 and cysteine 132 are joined by a disulfide bond. Residues tryptophan 127 and glutamine 139 each coordinate a mannooligosaccharide derivative. N-linked (GlcNAc...) asparagine glycosylation occurs at asparagine 165. 2 disulfides stabilise this stretch: cysteine 193–cysteine 223 and cysteine 208–cysteine 235. A mannooligosaccharide derivative contacts are provided by aspartate 194, arginine 200, glutamate 219, and tyrosine 225.

Belongs to the OS-9 family. Interacts with missfolded ER lumenal proteins.

It is found in the endoplasmic reticulum membrane. Lectin involved in the quality control of the secretory pathway. As a member of the endoplasmic reticulum-associated degradation lumenal (ERAD-L) surveillance system, targets misfolded endoplasmic reticulum lumenal glycoproteins for degradation. This Candida albicans (strain SC5314 / ATCC MYA-2876) (Yeast) protein is Protein OS-9 homolog (YOS9).